A 186-amino-acid polypeptide reads, in one-letter code: MIRELEYYGSHILRRKADIIPEITDTIRQLVQDMYETMVAHKGVGLAAPQVGESLSLFVVCVEGETEDGDLIFCDFPKVYINPVLSNASEDLVIGREGCLSIPGLRADVYRPQSITVTALNLDGQEFTEHLEGFPARIIMHENDHLHGVLYIDKMEEPKDIKKFKASLEKIRRRYHAHVKPEDRAS.

2 residues coordinate Fe cation: C99 and H141. The active site involves E142. Position 145 (H145) interacts with Fe cation.

This sequence belongs to the polypeptide deformylase family. The cofactor is Fe(2+).

It catalyses the reaction N-terminal N-formyl-L-methionyl-[peptide] + H2O = N-terminal L-methionyl-[peptide] + formate. Its function is as follows. Removes the formyl group from the N-terminal Met of newly synthesized proteins. Requires at least a dipeptide for an efficient rate of reaction. N-terminal L-methionine is a prerequisite for activity but the enzyme has broad specificity at other positions. This Chlamydia felis (strain Fe/C-56) (Chlamydophila felis) protein is Peptide deformylase.